The chain runs to 649 residues: Protein PSK SIMULATOR 3 (649 aa).

Residue Gly2 is the site of N-myristoyl glycine attachment. A disordered region spans residues 18–43 (SGSSVADDGREPDFGHSQPNGQTSLI).

Its subcellular location is the nucleus. In terms of biological role, promotes plant growth, especially at the vegetative stage, probably via the regulation of phytosulfokine (PSK) signaling; PSK are peptide phytohormones acting as growth factors. Together with PSI2 and PSI3, required during vegetative growth and reproduction. May also have a function in carbohydrate metabolism. The sequence is that of Protein PSK SIMULATOR 3 from Arabidopsis thaliana (Mouse-ear cress).